Consider the following 70-residue polypeptide: Movement protein TGBp3 (70 aa).

The Lumenal portion of the chain corresponds to methionine 1–asparagine 4. A helical transmembrane segment spans residues threonine 5–valine 27. Residues arginine 28–histidine 70 lie on the Cytoplasmic side of the membrane.

This sequence belongs to the Tymovirales TGBp3 protein family.

It is found in the host endoplasmic reticulum membrane. Functionally, plays a role in viral cell-to-cell propagation, by facilitating genome transport to neighboring plant cells through plasmosdesmata. May induce the formation of granular vesicles derived from the endoplasmic reticulum, which align on actin filaments. The sequence is that of Movement protein TGBp3 from Brassica campestris (Field mustard).